Reading from the N-terminus, the 240-residue chain is Ubiquinone biosynthesis O-methyltransferase (240 aa).

Positions 44, 64, 85, and 129 each coordinate S-adenosyl-L-methionine.

Belongs to the methyltransferase superfamily. UbiG/COQ3 family.

The catalysed reaction is a 3-demethylubiquinol + S-adenosyl-L-methionine = a ubiquinol + S-adenosyl-L-homocysteine + H(+). The enzyme catalyses a 3-(all-trans-polyprenyl)benzene-1,2-diol + S-adenosyl-L-methionine = a 2-methoxy-6-(all-trans-polyprenyl)phenol + S-adenosyl-L-homocysteine + H(+). It participates in cofactor biosynthesis; ubiquinone biosynthesis. O-methyltransferase that catalyzes the 2 O-methylation steps in the ubiquinone biosynthetic pathway. This chain is Ubiquinone biosynthesis O-methyltransferase, found in Escherichia coli (strain K12 / MC4100 / BW2952).